The primary structure comprises 209 residues: Ribosomal RNA large subunit methyltransferase E (209 aa).

Residues G63, W65, D83, D99, and D124 each coordinate S-adenosyl-L-methionine. K164 serves as the catalytic Proton acceptor.

It belongs to the class I-like SAM-binding methyltransferase superfamily. RNA methyltransferase RlmE family.

The protein localises to the cytoplasm. It catalyses the reaction uridine(2552) in 23S rRNA + S-adenosyl-L-methionine = 2'-O-methyluridine(2552) in 23S rRNA + S-adenosyl-L-homocysteine + H(+). Specifically methylates the uridine in position 2552 of 23S rRNA at the 2'-O position of the ribose in the fully assembled 50S ribosomal subunit. The protein is Ribosomal RNA large subunit methyltransferase E of Shewanella oneidensis (strain ATCC 700550 / JCM 31522 / CIP 106686 / LMG 19005 / NCIMB 14063 / MR-1).